A 544-amino-acid chain; its full sequence is Chaperonin GroEL (544 aa).

Residues 30 to 33 (TLGP), Lys-51, 87 to 91 (DGTTT), Gly-415, 478 to 480 (NAA), and Asp-494 contribute to the ATP site.

The protein belongs to the chaperonin (HSP60) family. In terms of assembly, forms a cylinder of 14 subunits composed of two heptameric rings stacked back-to-back. Interacts with the co-chaperonin GroES.

The protein localises to the cytoplasm. It catalyses the reaction ATP + H2O + a folded polypeptide = ADP + phosphate + an unfolded polypeptide.. Functionally, together with its co-chaperonin GroES, plays an essential role in assisting protein folding. The GroEL-GroES system forms a nano-cage that allows encapsulation of the non-native substrate proteins and provides a physical environment optimized to promote and accelerate protein folding. This chain is Chaperonin GroEL, found in Geobacter sulfurreducens (strain ATCC 51573 / DSM 12127 / PCA).